The chain runs to 533 residues: Apolipoprotein N-acyltransferase (533 aa).

The next 5 membrane-spanning stretches (helical) occupy residues 17–37 (FFLP…WPAV), 72–92 (LLFC…GGIL), 116–136 (GFRS…WAYM), 165–185 (GVWG…LLFM), and 190–210 (FQVK…PLLY). In terms of domain architecture, CN hydrolase spans 232-499 (VQPDIDPHEK…QSVLTADVPL (268 aa)). The active-site Proton acceptor is the Glu274. Lys352 is an active-site residue. Cys410 serves as the catalytic Nucleophile. The chain crosses the membrane as a helical span at residues 510 to 530 (PDLVPHVCLGIAGVLALVAAV).

The protein belongs to the CN hydrolase family. Apolipoprotein N-acyltransferase subfamily.

It localises to the cell inner membrane. It catalyses the reaction N-terminal S-1,2-diacyl-sn-glyceryl-L-cysteinyl-[lipoprotein] + a glycerophospholipid = N-acyl-S-1,2-diacyl-sn-glyceryl-L-cysteinyl-[lipoprotein] + a 2-acyl-sn-glycero-3-phospholipid + H(+). It functions in the pathway protein modification; lipoprotein biosynthesis (N-acyl transfer). In terms of biological role, catalyzes the phospholipid dependent N-acylation of the N-terminal cysteine of apolipoprotein, the last step in lipoprotein maturation. This Chlorobaculum tepidum (strain ATCC 49652 / DSM 12025 / NBRC 103806 / TLS) (Chlorobium tepidum) protein is Apolipoprotein N-acyltransferase.